The chain runs to 120 residues: Large ribosomal subunit protein uL18 (120 aa).

Residues 1–25 are disordered; that stretch reads MKQTRTAARQSRHQRIRRKVKGTSD. Residues 10–21 are compositionally biased toward basic residues; that stretch reads QSRHQRIRRKVK.

This sequence belongs to the universal ribosomal protein uL18 family. As to quaternary structure, part of the 50S ribosomal subunit; part of the 5S rRNA/L5/L18/L25 subcomplex. Contacts the 5S and 23S rRNAs.

This is one of the proteins that bind and probably mediate the attachment of the 5S RNA into the large ribosomal subunit, where it forms part of the central protuberance. The chain is Large ribosomal subunit protein uL18 from Thermosynechococcus vestitus (strain NIES-2133 / IAM M-273 / BP-1).